The chain runs to 983 residues: UPF0746 protein DDB_G0280809 (983 aa).

Positions 1–21 (MISNKRKEIDTINEHHEKNND) are enriched in basic and acidic residues. The tract at residues 1-26 (MISNKRKEIDTINEHHEKNNDDSDGI) is disordered. Residues 42 to 76 (SGSTNYRELQIIAKSLGLASNGKKQLVYNRIEGYF) enclose the SAP domain. Residues 391-413 (HTTPTSTSTSTSTSTSTYTSTST) form a disordered region. Positions 392–413 (TTPTSTSTSTSTSTSTYTSTST) are enriched in low complexity.

It belongs to the UPF0746 family.

In Dictyostelium discoideum (Social amoeba), this protein is UPF0746 protein DDB_G0280809.